Here is a 48-residue protein sequence, read N- to C-terminus: uncharacterized protein (48 aa).

This is an uncharacterized protein from Schizosaccharomyces pombe (strain 972 / ATCC 24843) (Fission yeast).